A 255-amino-acid polypeptide reads, in one-letter code: Small ribosomal subunit protein uS2 (255 aa).

The segment at 233-255 (DFVAEEAASEESLEELAEIVEGK) is disordered.

The protein belongs to the universal ribosomal protein uS2 family.

In Lactococcus lactis subsp. lactis (strain IL1403) (Streptococcus lactis), this protein is Small ribosomal subunit protein uS2 (rpsB).